Here is a 366-residue protein sequence, read N- to C-terminus: tRNA/tmRNA (uracil-C(5))-methyltransferase (366 aa).

Gln-189, Tyr-217, Asn-222, Glu-238, and Asp-298 together coordinate S-adenosyl-L-methionine. Cys-323 serves as the catalytic Nucleophile. Glu-357 functions as the Proton acceptor in the catalytic mechanism.

The protein belongs to the class I-like SAM-binding methyltransferase superfamily. RNA M5U methyltransferase family. TrmA subfamily.

It catalyses the reaction uridine(54) in tRNA + S-adenosyl-L-methionine = 5-methyluridine(54) in tRNA + S-adenosyl-L-homocysteine + H(+). The enzyme catalyses uridine(341) in tmRNA + S-adenosyl-L-methionine = 5-methyluridine(341) in tmRNA + S-adenosyl-L-homocysteine + H(+). Functionally, dual-specificity methyltransferase that catalyzes the formation of 5-methyluridine at position 54 (m5U54) in all tRNAs, and that of position 341 (m5U341) in tmRNA (transfer-mRNA). The polypeptide is tRNA/tmRNA (uracil-C(5))-methyltransferase (Photorhabdus laumondii subsp. laumondii (strain DSM 15139 / CIP 105565 / TT01) (Photorhabdus luminescens subsp. laumondii)).